The chain runs to 514 residues: tRNA-2-methylthio-N(6)-dimethylallyladenosine synthase (514 aa).

The region spanning 68–186 (RTFLIKTYGC…LPEILEEAYL (119 aa)) is the MTTase N-terminal domain. [4Fe-4S] cluster contacts are provided by Cys77, Cys113, Cys147, Cys223, Cys227, and Cys230. Positions 209–439 (RDGHIKAWVN…NKKVGIYSQQ (231 aa)) constitute a Radical SAM core domain. A TRAM domain is found at 442–505 (SQYEGKIVTV…QYSLNGTFIQ (64 aa)).

It belongs to the methylthiotransferase family. MiaB subfamily. Monomer. The cofactor is [4Fe-4S] cluster.

It is found in the cytoplasm. The enzyme catalyses N(6)-dimethylallyladenosine(37) in tRNA + (sulfur carrier)-SH + AH2 + 2 S-adenosyl-L-methionine = 2-methylsulfanyl-N(6)-dimethylallyladenosine(37) in tRNA + (sulfur carrier)-H + 5'-deoxyadenosine + L-methionine + A + S-adenosyl-L-homocysteine + 2 H(+). Its function is as follows. Catalyzes the methylthiolation of N6-(dimethylallyl)adenosine (i(6)A), leading to the formation of 2-methylthio-N6-(dimethylallyl)adenosine (ms(2)i(6)A) at position 37 in tRNAs that read codons beginning with uridine. The sequence is that of tRNA-2-methylthio-N(6)-dimethylallyladenosine synthase from Staphylococcus epidermidis (strain ATCC 35984 / DSM 28319 / BCRC 17069 / CCUG 31568 / BM 3577 / RP62A).